Here is a 257-residue protein sequence, read N- to C-terminus: MFAPIDPVKIPVVSNPWITMGTLIGYLLFVLKLGPKIMEHRKPFHLNGVIRIYNIFQILYNGLILVLGVHFLFVLKAYQISCIVSLPMDHKYKDRERLICTLYLVNKFVDLVETIFFVLRKKDRQISFLHVFHHFAMAFFGYLYYCFHGYGGVAFPQCLLNTAVHVIMYAYYYLSSISKEVQRSLWWKKYITIAQLVQFAIILLHCTITLAQPNCAVNRPLTYGCGSLSAFFAVIFSQFYYHNYIKPGKKSAKQNKN.

7 helical membrane-spanning segments follow: residues 10–30 (IPVVSNPWITMGTLIGYLLFV), 55–75 (IFQILYNGLILVLGVHFLFVL), 98–118 (LICTLYLVNKFVDLVETIFFV), 135–155 (FAMAFFGYLYYCFHGYGGVAF), 158–178 (CLLNTAVHVIMYAYYYLSSIS), 191–211 (ITIAQLVQFAIILLHCTITLA), and 221–241 (LTYGCGSLSAFFAVIFSQFYY).

This sequence belongs to the ELO family. Highly expressed in females. Little or no expression detected in males.

Its subcellular location is the endoplasmic reticulum membrane. It catalyses the reaction a very-long-chain acyl-CoA + malonyl-CoA + H(+) = a very-long-chain 3-oxoacyl-CoA + CO2 + CoA. It participates in lipid metabolism; fatty acid biosynthesis. Functionally, condensing enzyme that elongates saturated and monounsaturated very long chain fatty acids, to yield products up to 30 carbons in length. May also elongate diunsaturated fatty acids. Important for courtship behavior where it probably has a role in female pheromone biosynthesis. The sequence is that of Very long chain fatty acid elongase F from Drosophila melanogaster (Fruit fly).